The sequence spans 241 residues: 6-hydroxymethyl-7,8-dihydropterin pyrophosphokinase (241 aa).

The protein belongs to the archaeal 6-HMPDK family. Requires Mg(2+) as cofactor.

The catalysed reaction is 6-hydroxymethyl-7,8-dihydropterin + ATP = (7,8-dihydropterin-6-yl)methyl diphosphate + AMP + H(+). Its pathway is cofactor biosynthesis; 5,6,7,8-tetrahydromethanopterin biosynthesis. Its function is as follows. Catalyzes the transfer of diphosphate from ATP to 6-hydroxymethyl-7,8-dihydropterin (6-HMD), leading to 6-hydroxymethyl-7,8-dihydropterin diphosphate (6-HMDP). In Methanocaldococcus jannaschii (strain ATCC 43067 / DSM 2661 / JAL-1 / JCM 10045 / NBRC 100440) (Methanococcus jannaschii), this protein is 6-hydroxymethyl-7,8-dihydropterin pyrophosphokinase.